The primary structure comprises 212 residues: uncharacterized protein (212 aa).

Residues Gly-53, Glu-74, and Asp-97 each coordinate S-adenosyl-L-methionine.

It belongs to the methyltransferase superfamily. YrrT family.

Its function is as follows. Could be a S-adenosyl-L-methionine-dependent methyltransferase. This is an uncharacterized protein from Bacillus cereus (strain ATCC 10987 / NRS 248).